The primary structure comprises 123 residues: Small ribosomal subunit protein uS13c (123 aa).

Residues 89–123 (RGKRHRNNLPVRGQRTRTNARSRRGSKKTVTGKKK) form a disordered region. A compositionally biased stretch (basic residues) spans 102–123 (QRTRTNARSRRGSKKTVTGKKK).

This sequence belongs to the universal ribosomal protein uS13 family. Part of the 30S ribosomal subunit.

The protein localises to the plastid. It is found in the chloroplast. In terms of biological role, located at the top of the head of the 30S subunit, it contacts several helices of the 16S rRNA. The chain is Small ribosomal subunit protein uS13c from Phaeodactylum tricornutum (strain CCAP 1055/1).